Consider the following 219-residue polypeptide: Ribose-5-phosphate isomerase A (219 aa).

Residues 28-31 (TGST), 81-84 (DGAD), and 94-97 (KGGG) each bind substrate. The Proton acceptor role is filled by Glu-103. Residue Lys-121 participates in substrate binding.

Belongs to the ribose 5-phosphate isomerase family. In terms of assembly, homodimer.

It catalyses the reaction aldehydo-D-ribose 5-phosphate = D-ribulose 5-phosphate. It functions in the pathway carbohydrate degradation; pentose phosphate pathway; D-ribose 5-phosphate from D-ribulose 5-phosphate (non-oxidative stage): step 1/1. In terms of biological role, catalyzes the reversible conversion of ribose-5-phosphate to ribulose 5-phosphate. The protein is Ribose-5-phosphate isomerase A of Erwinia tasmaniensis (strain DSM 17950 / CFBP 7177 / CIP 109463 / NCPPB 4357 / Et1/99).